Reading from the N-terminus, the 277-residue chain is Putative acetylornithine deacetylase (277 aa).

The catalysed reaction is N(2)-acetyl-L-ornithine + H2O = L-ornithine + acetate. It participates in amino-acid biosynthesis; L-arginine biosynthesis; L-ornithine from N(2)-acetyl-L-ornithine (linear): step 1/1. The polypeptide is Putative acetylornithine deacetylase (argE) (Leptospira biflexa).